The sequence spans 400 residues: Dihydrolipoyllysine-residue succinyltransferase component of 2-oxoglutarate dehydrogenase complex (400 aa).

Residues glycine 2–asparagine 77 enclose the Lipoyl-binding domain. At lysine 43 the chain carries N6-lipoyllysine. Polar residues predominate over residues asparagine 85–glutamine 97. Positions asparagine 85–threonine 113 are disordered. The region spanning threonine 113–methionine 150 is the Peripheral subunit-binding (PSBD) domain. Active-site residues include histidine 371 and aspartate 375.

The protein belongs to the 2-oxoacid dehydrogenase family. In terms of assembly, forms a 24-polypeptide structural core with octahedral symmetry. Part of the 2-oxoglutarate dehydrogenase (OGDH) complex composed of E1 (2-oxoglutarate dehydrogenase), E2 (dihydrolipoamide succinyltransferase) and E3 (dihydrolipoamide dehydrogenase); the complex contains multiple copies of the three enzymatic components (E1, E2 and E3). (R)-lipoate serves as cofactor.

It carries out the reaction N(6)-[(R)-dihydrolipoyl]-L-lysyl-[protein] + succinyl-CoA = N(6)-[(R)-S(8)-succinyldihydrolipoyl]-L-lysyl-[protein] + CoA. Its pathway is amino-acid degradation; L-lysine degradation via saccharopine pathway; glutaryl-CoA from L-lysine: step 6/6. E2 component of the 2-oxoglutarate dehydrogenase (OGDH) complex which catalyzes the second step in the conversion of 2-oxoglutarate to succinyl-CoA and CO(2). The protein is Dihydrolipoyllysine-residue succinyltransferase component of 2-oxoglutarate dehydrogenase complex (sucB) of Rickettsia bellii (strain RML369-C).